Consider the following 368-residue polypeptide: N-acetylneuraminate epimerase (368 aa).

Positions 1-19 (MNKTIMALAIMMASFAANA) are cleaved as a signal peptide. Kelch repeat units follow at residues 40 to 84 (TVYI…AFID), 86 to 137 (NLYV…FVHN), 139 to 173 (KAYVTGGVNQNIFNGYFEDLNEAGKDSTAIDKINA), 174 to 219 (HYFD…VNKG), 222 to 265 (TWLI…VAGG), 287 to 336 (ENYQ…PWNN), and 338 to 367 (LLIIGGETAGGKAVTDSVLISVKDNKVTVQ). The active-site Proton acceptor is E228.

The protein belongs to the NanM family. In terms of assembly, homodimer.

It localises to the periplasm. It catalyses the reaction N-acetyl-alpha-neuraminate = N-acetyl-beta-neuraminate. Functionally, converts alpha-N-acetylneuranimic acid (Neu5Ac) to the beta-anomer, accelerating the equilibrium between the alpha- and beta-anomers. Probably facilitates sialidase-negative bacteria to compete successfully for limited amounts of extracellular Neu5Ac, which is likely taken up in the beta-anomer. In addition, the rapid removal of sialic acid from solution might be advantageous to the bacterium to damp down host responses. This Shigella flexneri serotype 5b (strain 8401) protein is N-acetylneuraminate epimerase.